A 334-amino-acid chain; its full sequence is Nucleoid-associated protein Pfl01_0983 (334 aa).

Belongs to the YejK family.

It localises to the cytoplasm. It is found in the nucleoid. This chain is Nucleoid-associated protein Pfl01_0983, found in Pseudomonas fluorescens (strain Pf0-1).